A 372-amino-acid polypeptide reads, in one-letter code: Y-box-binding protein 3 (372 aa).

The segment at 1 to 82 is disordered; sequence MSEAGEATTT…LATAAGSEDA (82 aa). Ser2 is subject to N-acetylserine. Phosphoserine is present on Ser2. Low complexity predominate over residues 7–28; sequence ATTTTTTTLPQAPTEAAAAAPQ. The residue at position 34 (Ser34) is a Phosphoserine. Over residues 35-79 the composition is skewed to low complexity; that stretch reads PVGSGAPQAAAPAPAAHVAGNPGGDAAPAATGTAAAASLATAAGS. The CSD domain maps to 93 to 157; it reads GTVKWFNVRN…GEKGAEAANV (65 aa). A phosphoserine mark is found at Ser134, Ser201, Ser203, and Ser204. The disordered stretch occupies residues 181–372; sequence YYGRRRGPPR…APPTQQSSAE (192 aa). Over residues 222–238 the composition is skewed to basic residues; that stretch reads QLRRPQYRPQYRQRRFP. At Arg251 the chain carries Omega-N-methylarginine. Positions 314–324 are enriched in polar residues; that stretch reads QQATSGPNQPS. At Ser324 the chain carries Phosphoserine. Position 326 is an omega-N-methylarginine (Arg326). The span at 327–340 shows a compositional bias: basic residues; it reads RGYRRPYNYRRRPR. Phosphoserine occurs at positions 346, 369, and 370.

Found in a mRNP complex with YBX2. Interacts with RRP1B. In terms of tissue distribution, highly expressed in skeletal muscle and heart.

The protein resides in the cytoplasm. It is found in the nucleus. Functionally, binds to the GM-CSF promoter. Seems to act as a repressor. Also binds to full-length mRNA and to short RNA sequences containing the consensus site 5'-UCCAUCA-3'. May have a role in translation repression. This Homo sapiens (Human) protein is Y-box-binding protein 3 (YBX3).